The chain runs to 228 residues: Vesicle transport protein SEC20 (228 aa).

Residues 1–199 are Cytoplasmic-facing; the sequence is MAAPQDVHVR…LITKYNRREL (199 aa). Positions 37-90 form a coiled coil; that stretch reads LSELTELNTKVKEKFQQLKHRIQELEQSAKEQDKESEKQLLLQEVENHKKQMLS. A helical; Anchor for type IV membrane protein membrane pass occupies residues 200 to 220; the sequence is TDKLLIFLALALFLATVLYIV. The Lumenal portion of the chain corresponds to 221–228; it reads KKRLFPFL.

The protein belongs to the SEC20 family. In terms of assembly, component of a SNARE complex consisting of STX18, USE1L, BNIP1/SEC20L and SEC22B. Interacts directly with STX18, RINT1/TIP20L and NAPA. Interacts with ZW10 through RINT1. Interacts with BCL2. Interacts with RNF186. Interacts with RNF185. Interacts with SQSTM1; increased by 'Lys-63'-linked polyubiquitination of BNIP1. In terms of processing, polyubiquitinated. 'Lys-63'-linked polyubiquitination by RNF185 increases the interaction with the autophagy receptor SQSTM1. Undergoes 'Lys-29'- and 'Lys-63'-linked polyubiquitination by RNF186 that may regulate BNIP1 localization to the mitochondrion.

It is found in the endoplasmic reticulum membrane. The protein localises to the mitochondrion membrane. As part of a SNARE complex may be involved in endoplasmic reticulum membranes fusion and be required for the maintenance of endoplasmic reticulum organization. Also plays a role in apoptosis. It is for instance required for endoplasmic reticulum stress-induced apoptosis. As a substrate of RNF185 interacting with SQSTM1, might also be involved in mitochondrial autophagy. The sequence is that of Vesicle transport protein SEC20 from Rattus norvegicus (Rat).